Reading from the N-terminus, the 602-residue chain is Raftlin (602 aa).

G2 carries N-myristoyl glycine lipidation. Residue C3 is the site of S-palmitoyl cysteine attachment. The segment covering 178-195 (TPASNNSVQSRDNKNVSN) has biased composition (polar residues). Disordered stretches follow at residues 178–282 (TPAS…RCSK), 451–495 (KKES…EVTE), and 524–567 (NETA…QSAP). 2 stretches are compositionally biased toward basic and acidic residues: residues 197–209 (PEDH…EKID) and 244–265 (PDCK…REAP). Over residues 468 to 477 (KPMKKSRKTK) the composition is skewed to basic residues.

The protein belongs to the raftlin family.

The protein localises to the cell membrane. Functionally, may play a pivotal role in the formation and/or maintenance of lipid rafts. May regulate B-cell antigen receptor-mediated signaling. This Gallus gallus (Chicken) protein is Raftlin (RFTN1).